Reading from the N-terminus, the 1486-residue chain is Chromosome partition protein MukB (1486 aa).

34 to 41 (GGNGAGKS) is a binding site for ATP. 3 coiled-coil regions span residues 334-418 (SDHL…QYNQ), 444-480 (LETF…QAYQ), and 509-603 (RHLA…RAPV). The flexible hinge stretch occupies residues 666–783 (PGGSEDQRLN…EVPLFGRAAR (118 aa)). Coiled coils occupy residues 835-923 (EAEI…AKLE), 977-1115 (EMLS…TAKA), and 1209-1266 (VEAI…QNVS).

This sequence belongs to the SMC family. MukB subfamily. As to quaternary structure, homodimerization via its hinge domain. Binds to DNA via its C-terminal region. Interacts, and probably forms a ternary complex, with MukE and MukF via its C-terminal region. The complex formation is stimulated by calcium or magnesium. Interacts with tubulin-related protein FtsZ.

Its subcellular location is the cytoplasm. It localises to the nucleoid. Functionally, plays a central role in chromosome condensation, segregation and cell cycle progression. Functions as a homodimer, which is essential for chromosome partition. Involved in negative DNA supercoiling in vivo, and by this means organize and compact chromosomes. May achieve or facilitate chromosome segregation by condensation DNA from both sides of a centrally located replisome during cell division. This Shigella sonnei (strain Ss046) protein is Chromosome partition protein MukB.